Consider the following 301-residue polypeptide: MTALNRAVASARVGTEVIRVRGLTFRYPKAAEPAVRGMEFTVGRGEIFGLLGPSGAGKSTTQKLLIGLLRDHGGQATVWDKEPAEWGPDYYERIGVSFELPNHYQKLTGYENLRFFASLYAGATADPMQLLAAVGLADDAHTLVGKYSKGMQMRLTFARSLINDPELLFLDEPTSGLDPVNARKIKDIIVDLKARGRTIFLTTHDMATADELCDRVAFVVDGRIVALDSPTELKIARSRRRVRVEYRGDGGGLETAEFGMDGLADDPAFHSVLRNHHVETIHSREASLDDVFVEVTGRQLT.

One can recognise an ABC transporter domain in the interval 18–246 (IRVRGLTFRY…RSRRRVRVEY (229 aa)). 52–59 (GPSGAGKS) provides a ligand contact to ATP.

It belongs to the ABC transporter superfamily. The complex is composed of 2 ATP-binding proteins and 2 transmembrane proteins.

The protein localises to the cell membrane. Part of the ABC transporter complex involved in fluoroquinolones export. Probably responsible for energy coupling to the transport system. This chain is Fluoroquinolones export ATP-binding protein MT2762, found in Mycobacterium tuberculosis (strain CDC 1551 / Oshkosh).